Consider the following 221-residue polypeptide: Octanoyltransferase (221 aa).

Residues 14–202 enclose the BPL/LPL catalytic domain; sequence GVRPDTLWFL…MLGARNAPHP (189 aa). Substrate-binding positions include 54–61, 128–130, and 141–143; these read RGGLLTYH, SIG, and GFA. C159 functions as the Acyl-thioester intermediate in the catalytic mechanism. A disordered region spans residues 197-221; sequence RNAPHPPAPNLSSGDLGTGTRAGRT.

The protein belongs to the LipB family.

It localises to the cytoplasm. It carries out the reaction octanoyl-[ACP] + L-lysyl-[protein] = N(6)-octanoyl-L-lysyl-[protein] + holo-[ACP] + H(+). Its pathway is protein modification; protein lipoylation via endogenous pathway; protein N(6)-(lipoyl)lysine from octanoyl-[acyl-carrier-protein]: step 1/2. Functionally, catalyzes the transfer of endogenously produced octanoic acid from octanoyl-acyl-carrier-protein onto the lipoyl domains of lipoate-dependent enzymes. Lipoyl-ACP can also act as a substrate although octanoyl-ACP is likely to be the physiological substrate. The sequence is that of Octanoyltransferase from Frankia casuarinae (strain DSM 45818 / CECT 9043 / HFP020203 / CcI3).